Reading from the N-terminus, the 318-residue chain is MTLTQAQMAPATDSREMVSPAVDLVLGASACCLACVFTNPLEVVKTRLQLQGELQAPGTYPRPYRGFVSSVTAVARADGLWGLQKGLAAGLLYQGLMNGVRFYCYSLACQAGLTQQPGGTVVAGAVAGALGAFVGSPAYLVKTQLQAQTGAAVAVGHQHQHQGVLSALETIWRQQGMLGLWRGVGAAVPRVTVGSAAQLATFTSAKAWVQDQQWFLEDSWLATLAGGMISSIAVVAVMAPFDVVSTRLYNQPVDRAGRGQLYGGLTDCLVKTCQQEGPLALYKGVGPAYLRLGPHTILSMFFWDELRKLALRAQHPGT.

3 Solcar repeats span residues V18–A111, Q115–W208, and D218–L309. Transmembrane regions (helical) follow at residues A21–L41, T59–G79, G112–V134, V184–A205, W220–P240, and L292–H315.

This sequence belongs to the mitochondrial carrier (TC 2.A.29) family.

Its subcellular location is the mitochondrion inner membrane. It carries out the reaction a dicarboxylate(in) + sulfate(out) = a dicarboxylate(out) + sulfate(in). In terms of biological role, putative antiporter that exchanges dicarboxylates and sulfur oxoanions across the inner membrane of mitochondria. This chain is Solute carrier family 25 member 34 (Slc25a34), found in Rattus norvegicus (Rat).